The chain runs to 109 residues: T cell receptor alpha variable 26-2 (109 aa).

The signal sequence occupies residues 1–19 (MKLVTSITVLLSLGIMGDA). One can recognise an Ig-like domain in the interval 20 to 109 (KTTQPNSMES…AAVYYCILRD (90 aa)). Residues Cys39 and Cys105 are joined by a disulfide bond. Asn40 carries N-linked (GlcNAc...) asparagine glycosylation.

In terms of assembly, alpha-beta TR is a heterodimer composed of an alpha and beta chain; disulfide-linked. The alpha-beta TR is associated with the transmembrane signaling CD3 coreceptor proteins to form the TR-CD3 (TcR or TCR). The assembly of alpha-beta TR heterodimers with CD3 occurs in the endoplasmic reticulum where a single alpha-beta TR heterodimer associates with one CD3D-CD3E heterodimer, one CD3G-CD3E heterodimer and one CD247 homodimer forming a stable octameric structure. CD3D-CD3E and CD3G-CD3E heterodimers preferentially associate with TR alpha and TR beta chains, respectively. The association of the CD247 homodimer is the last step of TcR assembly in the endoplasmic reticulum and is required for transport to the cell surface.

Its subcellular location is the cell membrane. In terms of biological role, v region of the variable domain of T cell receptor (TR) alpha chain that participates in the antigen recognition. Alpha-beta T cell receptors are antigen specific receptors which are essential to the immune response and are present on the cell surface of T lymphocytes. Recognize peptide-major histocompatibility (MH) (pMH) complexes that are displayed by antigen presenting cells (APC), a prerequisite for efficient T cell adaptive immunity against pathogens. Binding of alpha-beta TR to pMH complex initiates TR-CD3 clustering on the cell surface and intracellular activation of LCK that phosphorylates the ITAM motifs of CD3G, CD3D, CD3E and CD247 enabling the recruitment of ZAP70. In turn ZAP70 phosphorylates LAT, which recruits numerous signaling molecules to form the LAT signalosome. The LAT signalosome propagates signal branching to three major signaling pathways, the calcium, the mitogen-activated protein kinase (MAPK) kinase and the nuclear factor NF-kappa-B (NF-kB) pathways, leading to the mobilization of transcription factors that are critical for gene expression and essential for T cell growth and differentiation. The T cell repertoire is generated in the thymus, by V-(D)-J rearrangement. This repertoire is then shaped by intrathymic selection events to generate a peripheral T cell pool of self-MH restricted, non-autoaggressive T cells. Post-thymic interaction of alpha-beta TR with the pMH complexes shapes TR structural and functional avidity. The chain is T cell receptor alpha variable 26-2 from Homo sapiens (Human).